We begin with the raw amino-acid sequence, 330 residues long: uncharacterized protein (330 aa).

Disordered stretches follow at residues 136-160 (VPPS…DESS) and 172-314 (DNEK…SQFN). The span at 223–235 (PKPPAPPPPPPVP) shows a compositional bias: pro residues. Low complexity predominate over residues 236–246 (ISMTPAAISVT). Polar residues-rich tracts occupy residues 263 to 276 (AQST…TTDE), 284 to 294 (TRSSSQSNSTV), and 304 to 314 (PASSPTFSQFN).

This is an uncharacterized protein from Danio rerio (Zebrafish).